Consider the following 1825-residue polypeptide: Serine protease/ABC transporter B family protein tagD (1825 aa).

Positions 1–26 are cleaved as a signal peptide; sequence MKSNTNIRVLLVSGLILIFIFLGIKF. Residues 307-727 enclose the Peptidase S8 domain; the sequence is PKAIFGTKDT…NAVFDTFAGA (421 aa). Active-site charge relay system residues include aspartate 338 and histidine 384. Residue asparagine 629 is glycosylated (N-linked (GlcNAc...) asparagine). Residue serine 652 is the Charge relay system of the active site. 4 N-linked (GlcNAc...) asparagine glycosylation sites follow: asparagine 704, asparagine 781, asparagine 849, and asparagine 896. The chain crosses the membrane as a helical span at residues 971-991; sequence YIVIIVAGGTMSLIITVLILI. N-linked (GlcNAc...) asparagine glycosylation is present at asparagine 1018. 4 helical membrane passes run 1071 to 1091, 1116 to 1136, 1189 to 1209, and 1210 to 1230; these read FIIE…ASIL, FIII…SSWI, GILL…VFIF, and TISW…AIVT. Residues 1075 to 1358 enclose the ABC transmembrane type-1 domain; it reads ITISTACSLV…LFGVYSSYVQ (284 aa). Asparagine 1295 is a glycosylation site (N-linked (GlcNAc...) asparagine). A run of 2 helical transmembrane segments spans residues 1304–1324 and 1327–1347; these read WLMV…LAIQ and FTVG…DSST. Positions 1386–1529 are disordered; that stretch reads DNIIDTNQDN…NDDPNDNNGI (144 aa). Residues 1388–1402 show a composition bias toward low complexity; it reads IIDTNQDNNNNNNND. The segment covering 1403–1415 has biased composition (acidic residues); that stretch reads DISDSSSDDDDDN. Asparagine 1424 carries an N-linked (GlcNAc...) asparagine glycan. Over residues 1465 to 1494 the composition is skewed to low complexity; that stretch reads GEGIDNNNNNNNDNNINDDNNQQDPNNNNN. Positions 1495–1514 are enriched in acidic residues; it reads EIDDDGDDDGDDDDEGEDEN. A compositionally biased stretch (low complexity) spans 1515 to 1529; sequence NNNNNNDDPNDNNGI. An ABC transporter domain is found at 1576 to 1813; the sequence is IEFKNVSFCY…KGKYYRMFAF (238 aa). The N-linked (GlcNAc...) asparagine glycan is linked to asparagine 1580. 1611-1618 serves as a coordination point for ATP; that stretch reads GPSGSGKS. 2 N-linked (GlcNAc...) asparagine glycosylation sites follow: asparagine 1715 and asparagine 1755.

In the C-terminal section; belongs to the ABC transporter superfamily. ABCB family. Multidrug resistance exporter (TC 3.A.1.201) subfamily. The protein in the N-terminal section; belongs to the peptidase S8 family.

Its subcellular location is the membrane. This Dictyostelium discoideum (Social amoeba) protein is Serine protease/ABC transporter B family protein tagD (tagD).